Reading from the N-terminus, the 181-residue chain is ATP synthase subunit delta (181 aa).

The protein belongs to the ATPase delta chain family. As to quaternary structure, F-type ATPases have 2 components, F(1) - the catalytic core - and F(0) - the membrane proton channel. F(1) has five subunits: alpha(3), beta(3), gamma(1), delta(1), epsilon(1). F(0) has three main subunits: a(1), b(2) and c(10-14). The alpha and beta chains form an alternating ring which encloses part of the gamma chain. F(1) is attached to F(0) by a central stalk formed by the gamma and epsilon chains, while a peripheral stalk is formed by the delta and b chains.

It is found in the cell membrane. F(1)F(0) ATP synthase produces ATP from ADP in the presence of a proton or sodium gradient. F-type ATPases consist of two structural domains, F(1) containing the extramembraneous catalytic core and F(0) containing the membrane proton channel, linked together by a central stalk and a peripheral stalk. During catalysis, ATP synthesis in the catalytic domain of F(1) is coupled via a rotary mechanism of the central stalk subunits to proton translocation. In terms of biological role, this protein is part of the stalk that links CF(0) to CF(1). It either transmits conformational changes from CF(0) to CF(1) or is implicated in proton conduction. The protein is ATP synthase subunit delta of Lacticaseibacillus casei (strain BL23) (Lactobacillus casei).